The sequence spans 332 residues: UDP-3-O-acylglucosamine N-acyltransferase (332 aa).

The Proton acceptor role is filled by His231.

This sequence belongs to the transferase hexapeptide repeat family. LpxD subfamily. In terms of assembly, homotrimer.

It carries out the reaction a UDP-3-O-[(3R)-3-hydroxyacyl]-alpha-D-glucosamine + a (3R)-hydroxyacyl-[ACP] = a UDP-2-N,3-O-bis[(3R)-3-hydroxyacyl]-alpha-D-glucosamine + holo-[ACP] + H(+). It participates in bacterial outer membrane biogenesis; LPS lipid A biosynthesis. Catalyzes the N-acylation of UDP-3-O-acylglucosamine using 3-hydroxyacyl-ACP as the acyl donor. Is involved in the biosynthesis of lipid A, a phosphorylated glycolipid that anchors the lipopolysaccharide to the outer membrane of the cell. In Ruthia magnifica subsp. Calyptogena magnifica, this protein is UDP-3-O-acylglucosamine N-acyltransferase.